We begin with the raw amino-acid sequence, 169 residues long: Peptide deformylase (169 aa).

Fe cation contacts are provided by Cys-91 and His-133. Glu-134 is a catalytic residue. A Fe cation-binding site is contributed by His-137.

The protein belongs to the polypeptide deformylase family. Requires Fe(2+) as cofactor.

The catalysed reaction is N-terminal N-formyl-L-methionyl-[peptide] + H2O = N-terminal L-methionyl-[peptide] + formate. Functionally, removes the formyl group from the N-terminal Met of newly synthesized proteins. Requires at least a dipeptide for an efficient rate of reaction. N-terminal L-methionine is a prerequisite for activity but the enzyme has broad specificity at other positions. The protein is Peptide deformylase of Klebsiella pneumoniae subsp. pneumoniae (strain ATCC 700721 / MGH 78578).